Consider the following 183-residue polypeptide: Beta-defensin 129 (183 aa).

A signal peptide spans 1–19 (MKLLFPIFASLMLQYQVNT). 3 disulfides stabilise this stretch: Cys-27-Cys-53, Cys-34-Cys-48, and Cys-38-Cys-54. The disordered stretch occupies residues 142-183 (ATSAKSNTKESGDSATASPPPAPPPPNILPTPSLELEEAEEQ). Positions 159-170 (SPPPAPPPPNIL) are enriched in pro residues.

The protein belongs to the beta-defensin family.

It is found in the secreted. In terms of biological role, has antibacterial activity. The polypeptide is Beta-defensin 129 (DEFB129) (Macaca fascicularis (Crab-eating macaque)).